The following is a 328-amino-acid chain: 2-oxoglutarate-dependent dioxygenase gloF (328 aa).

A Fe2OG dioxygenase domain is found at 175 to 289 (DTSELRMNHY…RYSVAYFGKP (115 aa)). Histidine 201, aspartate 203, and histidine 261 together coordinate Fe cation. Arginine 280 is a binding site for 2-oxoglutarate.

It belongs to the iron/ascorbate-dependent oxidoreductase family. Fe(2+) is required as a cofactor.

Its pathway is mycotoxin biosynthesis. Its function is as follows. 2-oxoglutarate-dependent dioxygenase; part of the gene cluster that mediates the biosynthesis of pneumocandins, lipohexapeptides of the echinocandin family that prevent fungal cell wall formation by non-competitive inhibition of beta-1,3-glucan synthase. The 10,12-dimethylmyristoyl side chain is synthesized by the reducing polyketide synthase gloL/GLPKS4. The thioesterase gloN/GLHYD exclusively interacts with gloL/GLPKS4 to maintain turnover of the polyketide side chain. The 10R,12S-dimethylmyristic acid is then transferred to the first thiolation domain of the nonribosomal peptide synthetase gloA/GLNRPS4 by the acyl-AMP ligase gloD/GLligase, followed by its acylation to L-ornithine to trigger elongation of the cyclic hexapeptide. L-ornithine, 4R-hydroxyl-L-proline (generated from L-proline by the dioxygenase gloF/GLOXY2), 3S-hydroxyl-L-homotyrosine (generated by gloG/GLHtyB, gloH/GLHtyA, gloI/GLHtyC, gloJ/GLHtyD and hydroxylated at C-3 by the dioxygenase gloM/GLOXY1), 3R-hydroxyl-L-glutamine (generated from L-glutamine probably by the dioxygenase gloE/GLOXY3) and 3S-hydroxyl-L-proline (generated from L-proline by the dioxygenase gloF/GLOXY2 to yield pneumocandin B0), or 3S-hydroxyl-4S-methyl-L-proline (generated from L-leucine by the dioxygenase gloC/GLOXY4 to yield pneumocandin A0) are sequentially added to the growing chain. The last C domain of gloA/GLNRPS4 is proposed to be responsible for cyclization by condensation to form the peptide bond between L-ornithine and 3S-hydroxyl-4S-methyl-L-proline (for pneumocandin A0) or 3S-hydroxyl-L-proline (for pneumocandin B0). Finally, the subsequent C-4 hydroxylation of 3S-hydroxyl-L-homotyrosine and L-ornithine dihydroxylation at C-4 and C-5 are performed by the cytochrome P450 monooxygenases gloP/GLP450-1 and gloO/GLP450-2, respectively. In Glarea lozoyensis (strain ATCC 20868 / MF5171), this protein is 2-oxoglutarate-dependent dioxygenase gloF.